The primary structure comprises 371 residues: Aminomethyltransferase (371 aa).

The protein belongs to the GcvT family. The glycine cleavage system is composed of four proteins: P, T, L and H.

The enzyme catalyses N(6)-[(R)-S(8)-aminomethyldihydrolipoyl]-L-lysyl-[protein] + (6S)-5,6,7,8-tetrahydrofolate = N(6)-[(R)-dihydrolipoyl]-L-lysyl-[protein] + (6R)-5,10-methylene-5,6,7,8-tetrahydrofolate + NH4(+). Functionally, the glycine cleavage system catalyzes the degradation of glycine. The polypeptide is Aminomethyltransferase (Cutibacterium acnes (strain DSM 16379 / KPA171202) (Propionibacterium acnes)).